A 711-amino-acid polypeptide reads, in one-letter code: Denticleless protein homolog B (711 aa).

3 WD repeats span residues 47–89 (GRAV…MQRL), 96–135 (AHTNAVFDIAWVPGEHKLVTASGDQTAKLWDVKAGELIGE), and 138–178 (GHQC…KDGF). Residues 168 to 171 (WDTR) carry the DDB1-binding motif motif. Residues 197–204 (PSKVKKRK) carry the Nuclear localization signal motif. 4 WD repeats span residues 215 to 254 (DSQQSVTVVIFQDEYTVISAGAVDGVVKIWDLRKNYSTYR), 270 to 309 (TRKLGYSSLVLDPTGTNLFASCTDDNVYMFNATGLKTDPV), 314 to 355 (GHQN…AAPI), and 359 to 398 (GHCQEVTSVAWCQSDFTKIATCSDDNTVRIWRLNRSSEDS). Positions 244 to 247 (WDLR) match the DDB1-binding motif motif. Disordered regions lie at residues 473–524 (QTPK…AFTP) and 601–698 (EFDQ…TPGS). Polar residues-rich tracts occupy residues 504–516 (TPKSSKGTDSKTP) and 606–627 (LSPSPSTSLHMNATDNPPTLSP). The span at 631–642 (MKSDFVDKENSS) shows a compositional bias: basic and acidic residues. Positions 658–675 (DNSSPQFKSSSSPSSRNS) are enriched in low complexity. Over residues 684–697 (NAPNSPVSVPTTPG) the composition is skewed to polar residues.

It belongs to the WD repeat cdt2 family. Component of the DCX(DTL) E3 ubiquitin ligase complex, at least composed of cul4 (cul4a or cul4b), ddb1, dtl/cdt2 and rbx1.

The protein localises to the nucleus. Its subcellular location is the cytoplasm. It is found in the cytoskeleton. It localises to the microtubule organizing center. The protein resides in the centrosome. The protein localises to the chromosome. Its pathway is protein modification; protein ubiquitination. Its function is as follows. Substrate-specific adapter of a DCX (DDB1-CUL4-X-box) E3 ubiquitin-protein ligase complex required for cell cycle control, DNA damage response and translesion DNA synthesis. The DCX(DTL) complex, also named CRL4(CDT2) complex, mediates the polyubiquitination and subsequent degradation of CDT1, CDKN1A/p21(CIP1), KMT5A and SDE2. CDT1 degradation in response to DNA damage is necessary to ensure proper cell cycle regulation of DNA replication. CDKN1A/p21(CIP1) degradation during S phase or following UV irradiation is essential to control replication licensing. KMT5A degradation is also important for a proper regulation of mechanisms such as TGF-beta signaling, cell cycle progression, DNA repair and cell migration. Most substrates require their interaction with PCNA for their polyubiquitination: substrates interact with PCNA via their PIP-box, and those containing the 'K+4' motif in the PIP box, recruit the DCX(DTL) complex, leading to their degradation. In undamaged proliferating cells, the DCX(DTL) complex also promotes the 'Lys-164' monoubiquitination of PCNA, thereby being involved in PCNA-dependent translesion DNA synthesis. May play a role in the regulation of the circadian clock. This is Denticleless protein homolog B (dtl-b) from Xenopus laevis (African clawed frog).